A 558-amino-acid polypeptide reads, in one-letter code: Formate--tetrahydrofolate ligase (558 aa).

Residue 67–74 (TPAGEGKT) participates in ATP binding.

This sequence belongs to the formate--tetrahydrofolate ligase family.

The catalysed reaction is (6S)-5,6,7,8-tetrahydrofolate + formate + ATP = (6R)-10-formyltetrahydrofolate + ADP + phosphate. Its pathway is one-carbon metabolism; tetrahydrofolate interconversion. In Sphingobium sp. (strain NBRC 103272 / SYK-6), this protein is Formate--tetrahydrofolate ligase.